We begin with the raw amino-acid sequence, 477 residues long: MSDASQGLRLYNTLTRAKTDFVPIDALNVRMYVCGPTVYDFAHIGNARPVIVFDVLFRLLRHLYGQAHVTYVRNITDVDDKINARALRDFGSEISAGKLSLNEAIRRVTEKTADQFHRDVATLGCLEPTVEPRATEFVEPRADGKADMITLIQSLIKRGHAYAAAGEVLFDTASMPDYGQLSKRNLDEQQAGARVAVDAHKKNPGDFVLWKLSSPEEPGWQSPWGRGRPGWHIECSAMSAAYLGEVFDIHGGGLDLIFPHHENEIAQSRCAHGTSVMANVWMHNGFLQVEGQKMSKSLGNFYSIHELLETETFGGRSWPGEVLRLAMLMTHYREPIDFSVRKLEEAENTLRKWKRAADLAPAAGQLPVEVIDALSDDLATYAAFQVLTQLAGEAADGNEAAAALKASLLFLGFDVASADIDEDGVAKAIANRLALIAAKNWTEADRIRDELLAQGVQLKDGKDPVTGERITTWEVKR.

Cysteine 34 is a binding site for Zn(2+). Residues 36 to 46 carry the 'HIGH' region motif; the sequence is PTVYDFAHIGN. The Zn(2+) site is built by cysteine 235, histidine 260, and glutamate 264. A 'KMSKS' region motif is present at residues 293–297; that stretch reads KMSKS. Residue lysine 296 coordinates ATP.

The protein belongs to the class-I aminoacyl-tRNA synthetase family. Monomer. The cofactor is Zn(2+).

The protein resides in the cytoplasm. The enzyme catalyses tRNA(Cys) + L-cysteine + ATP = L-cysteinyl-tRNA(Cys) + AMP + diphosphate. The sequence is that of Cysteine--tRNA ligase from Mesorhizobium japonicum (strain LMG 29417 / CECT 9101 / MAFF 303099) (Mesorhizobium loti (strain MAFF 303099)).